Consider the following 479-residue polypeptide: Ribulose bisphosphate carboxylase large chain (479 aa).

Positions 1–2 (MS) are excised as a propeptide. Substrate contacts are provided by Asn-123 and Thr-173. Lys-175 acts as the Proton acceptor in catalysis. Lys-177 serves as a coordination point for substrate. Lys-201, Asp-203, and Glu-204 together coordinate Mg(2+). Lys-201 carries the N6-carboxylysine modification. A Phosphoserine modification is found at Ser-208. The active-site Proton acceptor is the His-294. Substrate is bound by residues Arg-295 and His-327. Thr-330 carries the post-translational modification Phosphothreonine. Ser-379 contributes to the substrate binding site.

The protein belongs to the RuBisCO large chain family. Type I subfamily. Heterohexadecamer of 8 large chains and 8 small chains; disulfide-linked. The disulfide link is formed within the large subunit homodimers. Mg(2+) serves as cofactor. In terms of processing, the disulfide bond which can form in the large chain dimeric partners within the hexadecamer appears to be associated with oxidative stress and protein turnover.

It localises to the plastid. The protein localises to the chloroplast. It catalyses the reaction 2 (2R)-3-phosphoglycerate + 2 H(+) = D-ribulose 1,5-bisphosphate + CO2 + H2O. It carries out the reaction D-ribulose 1,5-bisphosphate + O2 = 2-phosphoglycolate + (2R)-3-phosphoglycerate + 2 H(+). RuBisCO catalyzes two reactions: the carboxylation of D-ribulose 1,5-bisphosphate, the primary event in carbon dioxide fixation, as well as the oxidative fragmentation of the pentose substrate in the photorespiration process. Both reactions occur simultaneously and in competition at the same active site. The polypeptide is Ribulose bisphosphate carboxylase large chain (Barbarea verna (Land cress)).